Reading from the N-terminus, the 242-residue chain is Probable transcriptional regulatory protein LBA0733 (242 aa).

Residues 1-22 are disordered; that stretch reads MSGHSKWHNIQGRKNAQDAKRG.

The protein belongs to the TACO1 family.

It localises to the cytoplasm. The polypeptide is Probable transcriptional regulatory protein LBA0733 (Lactobacillus acidophilus (strain ATCC 700396 / NCK56 / N2 / NCFM)).